Here is a 90-residue protein sequence, read N- to C-terminus: Inactive casein kinase II subunit alpha-2 (90 aa).

Residues 40-48 and K63 contribute to the ATP site; that span reads VGRGKYSEV.

Belongs to the protein kinase superfamily. Ser/Thr protein kinase family. CK2 subfamily.

Its function is as follows. The Nipponbare allele of HD6 contains a premature stop codon, resulting in a truncated non-functional product. The sequence is that of Inactive casein kinase II subunit alpha-2 from Oryza sativa subsp. japonica (Rice).